Consider the following 209-residue polypeptide: Na(+)-translocating NADH-quinone reductase subunit D (209 aa).

The next 5 helical transmembrane spans lie at 42-62 (LVMT…ISLI), 70-90 (VRII…DQIL), 103-123 (VFVG…AYAM), 131-151 (FMDG…VGFV), and 178-198 (NGLF…IWGL).

The protein belongs to the NqrDE/RnfAE family. As to quaternary structure, composed of six subunits; NqrA, NqrB, NqrC, NqrD, NqrE and NqrF.

The protein localises to the cell inner membrane. The catalysed reaction is a ubiquinone + n Na(+)(in) + NADH + H(+) = a ubiquinol + n Na(+)(out) + NAD(+). Functionally, NQR complex catalyzes the reduction of ubiquinone-1 to ubiquinol by two successive reactions, coupled with the transport of Na(+) ions from the cytoplasm to the periplasm. NqrA to NqrE are probably involved in the second step, the conversion of ubisemiquinone to ubiquinol. The polypeptide is Na(+)-translocating NADH-quinone reductase subunit D (Yersinia enterocolitica serotype O:8 / biotype 1B (strain NCTC 13174 / 8081)).